The following is a 300-amino-acid chain: MILEGSGVMNLNPANNLLHQQPAWTDSYPTCNVSSGFFGSQWHEIHPQYWTKYQVWEWLQHLLDTNQLDASCIPFQEFDISGEHLCSMSLQEFTRAAGSAGQLLYSNLQHLKWNGQCSSDLFQSAHNVIVKTEQTDPSIMNTWKEENYLYDPSYGSTVDLLDSKTFCRAQISMTTSSHLPVAESPDMKKEQDHPVKSHTKKHNPRGTHLWEFIRDILLSPDKNPGLIKWEDRSEGIFRFLKSEAVAQLWGKKKNNSSMTYEKLSRAMRYYYKREILERVDGRRLVYKFGKNARGWRENEN.

Residues 29 to 115 (PTCNVSSGFF…SNLQHLKWNG (87 aa)) enclose the PNT domain. The segment at 181-203 (VAESPDMKKEQDHPVKSHTKKHN) is disordered. The span at 185-195 (PDMKKEQDHPV) shows a compositional bias: basic and acidic residues. Residues 207–289 (THLWEFIRDI…DGRRLVYKFG (83 aa)) constitute a DNA-binding region (ETS).

This sequence belongs to the ETS family. Highly expressed in kidney and lung, weakly in skeletal muscle, heart, and liver, and not detected in brain, spleen or testis.

Its subcellular location is the nucleus. Transcriptional activator that may play a role in regulating epithelial cell differentiation and proliferation. May act as a repressor for a specific subset of ETS/AP-1-responsive genes, and as a modulator of the nuclear response to mitogen-activated protein kinase signaling cascades. Binds to DNA sequences containing the consensus nucleotide core sequence GGAA. Involved in regulation of TNFRSF10B/DR5 expression through Ets-binding sequences on the TNFRSF10B/DR5 promoter. The protein is ETS homologous factor of Mus musculus (Mouse).